Reading from the N-terminus, the 158-residue chain is Endoribonuclease YbeY (158 aa).

Zn(2+) contacts are provided by H119, H123, and H129.

The protein belongs to the endoribonuclease YbeY family. Requires Zn(2+) as cofactor.

It is found in the cytoplasm. Functionally, single strand-specific metallo-endoribonuclease involved in late-stage 70S ribosome quality control and in maturation of the 3' terminus of the 16S rRNA. The sequence is that of Endoribonuclease YbeY from Shewanella sediminis (strain HAW-EB3).